Consider the following 131-residue polypeptide: Histone H2A.1 (131 aa).

S2 carries the N-acetylserine modification. N6-acetyllysine occurs at positions 5 and 8. Q106 carries the post-translational modification N5-methylglutamine. Position 128 is a phosphoserine (S128). Positions S128–Q129 match the [ST]-Q motif motif.

Belongs to the histone H2A family. In terms of assembly, the nucleosome is a histone octamer containing two molecules each of H2A, H2B, H3 and H4 assembled in one H3-H4 heterotetramer and two H2A-H2B heterodimers. The octamer wraps approximately 147 bp of DNA. In terms of processing, phosphorylated to form H2AS128ph (gamma-H2A) in response to DNA double-strand breaks (DSBs) generated by exogenous genotoxic agents and by stalled replication forks. Phosphorylation is dependent on the DNA damage checkpoint kinases MEC1/ATR and TEL1/ATM, spreads on either side of a detected DSB site and may mark the surrounding chromatin for recruitment of proteins required for DNA damage signaling and repair. Gamma-H2A is removed from the DNA prior to the strand invasion-primer extension step of the repair process and subsequently dephosphorylated by PPH3, a component of the histone H2A phosphatase complex (HTP-C). Dephosphorylation is necessary for efficient recovery from the DNA damage checkpoint. Post-translationally, acetylated by ESA1 to form H2AK4ac and H2AK7ac.

The protein resides in the nucleus. It localises to the chromosome. Core component of nucleosome which plays a central role in DNA double strand break (DSB) repair. Nucleosomes wrap and compact DNA into chromatin, limiting DNA accessibility to the cellular machineries which require DNA as a template. Histones thereby play a central role in transcription regulation, DNA repair, DNA replication and chromosomal stability. DNA accessibility is regulated via a complex set of post-translational modifications of histones, also called histone code, and nucleosome remodeling. The protein is Histone H2A.1 (HTA1) of Candida glabrata (strain ATCC 2001 / BCRC 20586 / JCM 3761 / NBRC 0622 / NRRL Y-65 / CBS 138) (Yeast).